The sequence spans 458 residues: MSITKEFDTITAISTPLGEGAIGIVRLSGTDALAIAQSVFKGKNLEQVASHTINYGHIIDPNTGTIVDEVMVSVMLAPKTFTRENVVEINTHGGIAVTNEILQLLIRQGARMAEPGEFTKRAFLNGRVDLTQAEAVMDIIRAKTDKAMTIAVKQLDGSLSQLINDTRQEILNTLAQVEVNIDYPEYDDVEEMTTALLREKTQEFQSLLENLLRTAKRGKILREGLSTAIIGRPNVGKSSLLNNLLREDKAIVTDIAGTTRDVIEEYVNIKGVPLKLVDTAGIRETDDLVEQIGVERSKKALQEADLVLLVLNASEKLTDQDRALLNLSQDSNRIILLNKTDLEQKIELEQLPADLISISVLTNQNINLIEDRINQLFFDNAGLVEQDATYLSNARHISLIEKAVQSLEAVNDGLALGMPVDLLQVDLTRTWEILGEITGDAAPDELITQLFSQFCLGK.

Positions 26, 88, and 127 each coordinate (6S)-5-formyl-5,6,7,8-tetrahydrofolate. One can recognise a TrmE-type G domain in the interval 224–378 (GLSTAIIGRP…IEDRINQLFF (155 aa)). Asn-234 contacts K(+). Residues 234 to 239 (NVGKSS), 253 to 259 (TDIAGTT), and 278 to 281 (DTAG) contribute to the GTP site. Ser-238 is a binding site for Mg(2+). The K(+) site is built by Thr-253, Ile-255, and Thr-258. Thr-259 is a Mg(2+) binding site. Lys-458 is a (6S)-5-formyl-5,6,7,8-tetrahydrofolate binding site.

Belongs to the TRAFAC class TrmE-Era-EngA-EngB-Septin-like GTPase superfamily. TrmE GTPase family. In terms of assembly, homodimer. Heterotetramer of two MnmE and two MnmG subunits. It depends on K(+) as a cofactor.

It is found in the cytoplasm. In terms of biological role, exhibits a very high intrinsic GTPase hydrolysis rate. Involved in the addition of a carboxymethylaminomethyl (cmnm) group at the wobble position (U34) of certain tRNAs, forming tRNA-cmnm(5)s(2)U34. The protein is tRNA modification GTPase MnmE of Streptococcus pyogenes serotype M4 (strain MGAS10750).